Here is a 301-residue protein sequence, read N- to C-terminus: GTPase Era (301 aa).

Residues 7-175 form the Era-type G domain; the sequence is YCGFIAIVGR…AAIVRKHLPE (169 aa). The tract at residues 15–22 is G1; sequence GRPNVGKS. 15-22 serves as a coordination point for GTP; sequence GRPNVGKS. Positions 41 to 45 are G2; sequence QTTRH. Residues 62 to 65 form a G3 region; sequence DTPG. GTP-binding positions include 62 to 66 and 124 to 127; these read DTPGL and NKVD. The tract at residues 124–127 is G4; sequence NKVD. The tract at residues 154–156 is G5; that stretch reads ISA. In terms of domain architecture, KH type-2 spans 206–283; it reads LGAELPYSVT…HLELWVKVKS (78 aa).

Belongs to the TRAFAC class TrmE-Era-EngA-EngB-Septin-like GTPase superfamily. Era GTPase family. As to quaternary structure, monomer.

The protein localises to the cytoplasm. It is found in the cell inner membrane. Its function is as follows. An essential GTPase that binds both GDP and GTP, with rapid nucleotide exchange. Plays a role in 16S rRNA processing and 30S ribosomal subunit biogenesis and possibly also in cell cycle regulation and energy metabolism. The chain is GTPase Era from Escherichia coli (strain K12 / DH10B).